We begin with the raw amino-acid sequence, 235 residues long: 2-C-methyl-D-erythritol 4-phosphate cytidylyltransferase (235 aa).

It belongs to the IspD/TarI cytidylyltransferase family. IspD subfamily.

The catalysed reaction is 2-C-methyl-D-erythritol 4-phosphate + CTP + H(+) = 4-CDP-2-C-methyl-D-erythritol + diphosphate. It functions in the pathway isoprenoid biosynthesis; isopentenyl diphosphate biosynthesis via DXP pathway; isopentenyl diphosphate from 1-deoxy-D-xylulose 5-phosphate: step 2/6. Catalyzes the formation of 4-diphosphocytidyl-2-C-methyl-D-erythritol from CTP and 2-C-methyl-D-erythritol 4-phosphate (MEP). This Pseudomonas putida (strain W619) protein is 2-C-methyl-D-erythritol 4-phosphate cytidylyltransferase.